A 306-amino-acid chain; its full sequence is Transcription initiation factor IIB 2 (306 aa).

A TFIIB-type zinc finger spans residues 6-37 (PKRVCPICGSTEFIYDPRRGEIVCAKCGYVIE). Zn(2+) contacts are provided by Cys10, Cys13, Cys29, and Cys32. 2 tandem repeats follow at residues 123–206 (SELD…ARGL) and 217–298 (EYVD…ELVE).

It belongs to the TFIIB family.

In terms of biological role, stabilizes TBP binding to an archaeal box-A promoter. Also responsible for recruiting RNA polymerase II to the pre-initiation complex (DNA-TBP-TFIIB). The polypeptide is Transcription initiation factor IIB 2 (Thermococcus kodakarensis (strain ATCC BAA-918 / JCM 12380 / KOD1) (Pyrococcus kodakaraensis (strain KOD1))).